Here is a 602-residue protein sequence, read N- to C-terminus: Sulfite reductase [NADPH] flavoprotein alpha-component (602 aa).

Residues 68–206 (ITIISASQTG…NYIQWSEELL (139 aa)) enclose the Flavodoxin-like domain. FMN-binding positions include 74-79 (SQTGNA), 121-124 (STQG), and 157-166 (LGDVSYNLFC). Residues 237–451 (YKPAVATVLL…VEEKSNFRLP (215 aa)) form the FAD-binding FR-type domain. FAD-binding positions include Thr325, Lys359, 389–392 (RLYS), 407–409 (TVG), and 422–425 (GGSS). Residues 522–523 (SR), 528–532 (KIYVQ), and Asp564 each bind NADP(+). Tyr602 contacts FAD.

Belongs to the NADPH-dependent sulphite reductase flavoprotein subunit CysJ family. It in the N-terminal section; belongs to the flavodoxin family. This sequence in the C-terminal section; belongs to the flavoprotein pyridine nucleotide cytochrome reductase family. In terms of assembly, alpha(8)-beta(8). The alpha component is a flavoprotein, the beta component is a hemoprotein. The cofactor is FAD. FMN serves as cofactor.

The catalysed reaction is hydrogen sulfide + 3 NADP(+) + 3 H2O = sulfite + 3 NADPH + 4 H(+). Its pathway is sulfur metabolism; hydrogen sulfide biosynthesis; hydrogen sulfide from sulfite (NADPH route): step 1/1. Functionally, component of the sulfite reductase complex that catalyzes the 6-electron reduction of sulfite to sulfide. This is one of several activities required for the biosynthesis of L-cysteine from sulfate. The flavoprotein component catalyzes the electron flow from NADPH -&gt; FAD -&gt; FMN to the hemoprotein component. The sequence is that of Sulfite reductase [NADPH] flavoprotein alpha-component from Buchnera aphidicola subsp. Schizaphis graminum (strain Sg).